We begin with the raw amino-acid sequence, 331 residues long: D-aspartate oxidase 2 (331 aa).

Asp35, Lys36, Ser43, and Gly307 together coordinate FAD.

It belongs to the DAMOX/DASOX family. Requires FAD as cofactor.

The protein localises to the cytoplasm. It catalyses the reaction D-aspartate + O2 + H2O = oxaloacetate + H2O2 + NH4(+). The enzyme catalyses D-glutamate + O2 + H2O = H2O2 + 2-oxoglutarate + NH4(+). Its function is as follows. Selectively catalyzes the oxidative deamination of acidic amino acids. May play a role in the egg-laying events and early development of the worm, in addition to quality control of the germ cells. The protein is D-aspartate oxidase 2 of Caenorhabditis briggsae.